Reading from the N-terminus, the 190-residue chain is GTP cyclohydrolase 1 (190 aa).

The Zn(2+) site is built by cysteine 80, histidine 83, and cysteine 151.

The protein belongs to the GTP cyclohydrolase I family. In terms of assembly, toroid-shaped homodecamer, composed of two pentamers of five dimers.

It catalyses the reaction GTP + H2O = 7,8-dihydroneopterin 3'-triphosphate + formate + H(+). The protein operates within cofactor biosynthesis; 7,8-dihydroneopterin triphosphate biosynthesis; 7,8-dihydroneopterin triphosphate from GTP: step 1/1. The sequence is that of GTP cyclohydrolase 1 from Rickettsia akari (strain Hartford).